The following is a 930-amino-acid chain: Isoleucine--tRNA ligase (930 aa).

Residues 57-67 (PYANGNIHVGH) carry the 'HIGH' region motif. Glutamate 554 contributes to the L-isoleucyl-5'-AMP binding site. A 'KMSKS' region motif is present at residues 595–599 (KMSKS). ATP is bound at residue lysine 598. Residues cysteine 888, cysteine 891, cysteine 908, and cysteine 911 each coordinate Zn(2+).

The protein belongs to the class-I aminoacyl-tRNA synthetase family. IleS type 1 subfamily. As to quaternary structure, monomer. Zn(2+) serves as cofactor.

It localises to the cytoplasm. It carries out the reaction tRNA(Ile) + L-isoleucine + ATP = L-isoleucyl-tRNA(Ile) + AMP + diphosphate. Functionally, catalyzes the attachment of isoleucine to tRNA(Ile). As IleRS can inadvertently accommodate and process structurally similar amino acids such as valine, to avoid such errors it has two additional distinct tRNA(Ile)-dependent editing activities. One activity is designated as 'pretransfer' editing and involves the hydrolysis of activated Val-AMP. The other activity is designated 'posttransfer' editing and involves deacylation of mischarged Val-tRNA(Ile). The sequence is that of Isoleucine--tRNA ligase from Streptococcus pneumoniae (strain JJA).